The following is a 518-amino-acid chain: MAGKDIKYGVKARESVLIGVNTLANAVKVTLGPKGRNVLIEKSFGAPTITKDGVSVAKEIELKDKFENMGAQMVKEVASKTSDVAGDGTTTATVLAQAIYTEGVKLVAAGGNPMEIKRGIDKGVEAVIAELRNIATPTKEQKEIAQVGTISANSDETIGNIIAEAMDKVGKEGVITVEEAKSMETTLDVVEGMQFDRGYLSPYFVTDPERMEVIMDDPYILLVEKKVSNMKDLLPVLEQVAKMGKGLFILAEDVDGEALATLVVNKLRGTINVAAVKAPGFGDRRKAMLEDIAILTGGQVISEDLGIKLENVTLNDLGTCKRIVTDKDATTIVDGAGDAAQLSSRVKQIHAQIADTTSDYDREKLQERLAKLIGGVAVINVGAATEIEMKEKKGRVEDALNATRAAVEEGVVPGGGVAYMRWLDALEALHLEGEQELGKKILSVPLKSLFVRLPIMLAVKVLLLLMQLRSLKDQTVSTQLPKFTKTLSLQVLSILPRLPVQPCKTQLLYPVCFSPPSV.

Residues 30 to 33, lysine 51, 87 to 91, and glycine 415 contribute to the ATP site; these read TLGP and DGTTT.

It belongs to the chaperonin (HSP60) family. In terms of assembly, forms a cylinder of 14 subunits composed of two heptameric rings stacked back-to-back. Interacts with the co-chaperonin GroES.

It localises to the cytoplasm. The enzyme catalyses ATP + H2O + a folded polypeptide = ADP + phosphate + an unfolded polypeptide.. Its function is as follows. Together with its co-chaperonin GroES, plays an essential role in assisting protein folding. The GroEL-GroES system forms a nano-cage that allows encapsulation of the non-native substrate proteins and provides a physical environment optimized to promote and accelerate protein folding. In Desulfotalea psychrophila (strain LSv54 / DSM 12343), this protein is Chaperonin GroEL.